The following is a 351-amino-acid chain: Probable dual-specificity RNA methyltransferase RlmN (351 aa).

E92 functions as the Proton acceptor in the catalytic mechanism. The region spanning 98–332 (TDQRLTVCIS…VSLRASRGLD (235 aa)) is the Radical SAM core domain. A disulfide bridge links C105 with C337. Residues C112, C116, and C119 each contribute to the [4Fe-4S] cluster site. S-adenosyl-L-methionine contacts are provided by residues 159 to 160 (GE), S189, 218 to 220 (SLH), and N294. The active-site S-methylcysteine intermediate is the C337.

It belongs to the radical SAM superfamily. RlmN family. The cofactor is [4Fe-4S] cluster.

The protein resides in the cytoplasm. It catalyses the reaction adenosine(2503) in 23S rRNA + 2 reduced [2Fe-2S]-[ferredoxin] + 2 S-adenosyl-L-methionine = 2-methyladenosine(2503) in 23S rRNA + 5'-deoxyadenosine + L-methionine + 2 oxidized [2Fe-2S]-[ferredoxin] + S-adenosyl-L-homocysteine. It carries out the reaction adenosine(37) in tRNA + 2 reduced [2Fe-2S]-[ferredoxin] + 2 S-adenosyl-L-methionine = 2-methyladenosine(37) in tRNA + 5'-deoxyadenosine + L-methionine + 2 oxidized [2Fe-2S]-[ferredoxin] + S-adenosyl-L-homocysteine. Specifically methylates position 2 of adenine 2503 in 23S rRNA and position 2 of adenine 37 in tRNAs. The protein is Probable dual-specificity RNA methyltransferase RlmN of Synechococcus sp. (strain CC9902).